A 94-amino-acid polypeptide reads, in one-letter code: Small ribosomal subunit protein uS19 (94 aa).

It belongs to the universal ribosomal protein uS19 family.

Its function is as follows. Protein S19 forms a complex with S13 that binds strongly to the 16S ribosomal RNA. The chain is Small ribosomal subunit protein uS19 from Carboxydothermus hydrogenoformans (strain ATCC BAA-161 / DSM 6008 / Z-2901).